The chain runs to 211 residues: ATP phosphoribosyltransferase (211 aa).

This sequence belongs to the ATP phosphoribosyltransferase family. Short subfamily. Heteromultimer composed of HisG and HisZ subunits.

Its subcellular location is the cytoplasm. The enzyme catalyses 1-(5-phospho-beta-D-ribosyl)-ATP + diphosphate = 5-phospho-alpha-D-ribose 1-diphosphate + ATP. The protein operates within amino-acid biosynthesis; L-histidine biosynthesis; L-histidine from 5-phospho-alpha-D-ribose 1-diphosphate: step 1/9. Functionally, catalyzes the condensation of ATP and 5-phosphoribose 1-diphosphate to form N'-(5'-phosphoribosyl)-ATP (PR-ATP). Has a crucial role in the pathway because the rate of histidine biosynthesis seems to be controlled primarily by regulation of HisG enzymatic activity. The protein is ATP phosphoribosyltransferase of Bacillus thuringiensis subsp. konkukian (strain 97-27).